The sequence spans 173 residues: Urease accessory protein UreE (173 aa).

The disordered stretch occupies residues 136–173; sequence PEGGAYAGSGQDHHDHSHGEHTQGEHTHDEAAEPHHHG. The span at 146–173 shows a compositional bias: basic and acidic residues; sequence QDHHDHSHGEHTQGEHTHDEAAEPHHHG.

This sequence belongs to the UreE family.

The protein localises to the cytoplasm. Its function is as follows. Involved in urease metallocenter assembly. Binds nickel. Probably functions as a nickel donor during metallocenter assembly. The sequence is that of Urease accessory protein UreE from Beijerinckia indica subsp. indica (strain ATCC 9039 / DSM 1715 / NCIMB 8712).